We begin with the raw amino-acid sequence, 144 residues long: MAKKRDSPKLIKIKDAIKLINQEVSLIGIVLEQREPKQCRNNDWICTLRIIDDTYPSPGLTVNVYSRTLEQLPQIKNHDDMILFTRIKMQTFDSGKRVNAACSRWVSSFALFEGEDLILHADEDTSAVFVWDGTDAPPASILAK.

This sequence belongs to the telombin family. Expressed at extremely low levels at the limit of detection.

The protein localises to the nucleus. It localises to the chromosome. Its subcellular location is the telomere. Its function is as follows. Binds specifically single-stranded telomeric DNA with weak affinity. Has probably no function in the regulation of telomere length. This Arabidopsis thaliana (Mouse-ear cress) protein is Protection of telomeres protein 1c.